We begin with the raw amino-acid sequence, 439 residues long: Probable aspartic proteinase GIP2 (439 aa).

The N-terminal stretch at 1–23 (MASSCCLHAILLCSLLFITSTTA) is a signal peptide. One can recognise a Peptidase A1 domain in the interval 47-420 (YLTQIQQRTP…DLARSRLGFT (374 aa)). 4 N-linked (GlcNAc...) asparagine glycosylation sites follow: asparagine 116, asparagine 280, asparagine 323, and asparagine 434.

Belongs to the peptidase A1 family. In terms of assembly, interacts with the Phytophtora parasitica xyloglucanase XEG1 and xyloglucanase-like XLP1. Possesses stronger binding affinity with XLP1, a truncated paralog of P.parasitica XEG1 which has no enzyme activity.

It is found in the secreted. Its subcellular location is the extracellular space. The protein localises to the apoplast. In terms of biological role, involved in plant defense against Phytophtora parasitica. Contributes positively to Nicotiana resistance against P.parasitica. Binds the P.parasitica xyloglucanase XEG1 and inhibits its cell wall degrading enzyme activity and its contribution as P.parasitica virulence factor. XEG1 acts as an important virulence factor during P.parasitica infection but also acts as a pathogen-associated molecular pattern (PAMP) in Nictotiana species, where it can trigger defense responses including cell death. (Microbial infection) Possesses stronger binding affinity with XLP1, a truncated paralog of P.parasitica XEG1 which has no enzyme activity. Is impaired in its inhibitor activity towards the P.parasitica xyloglucanase XEG1 when hijacked by XLP1 binding. This Nicotiana benthamiana protein is Probable aspartic proteinase GIP2.